The primary structure comprises 260 residues: DNA repair protein RecO (260 aa).

The protein belongs to the RecO family.

In terms of biological role, involved in DNA repair and RecF pathway recombination. The protein is DNA repair protein RecO of Streptococcus suis (strain 98HAH33).